Consider the following 468-residue polypeptide: Argininosuccinate synthase (468 aa).

ATP-binding positions include 10-18 (AYSGGLDTS) and Ala-37. Residues Tyr-90 and Ser-95 each contribute to the L-citrulline site. Residue Gly-120 participates in ATP binding. L-aspartate is bound by residues Thr-122, Asn-126, and Asp-127. Asn-126 contributes to the L-citrulline binding site. L-citrulline-binding residues include Arg-130, Ser-182, Ser-191, Glu-267, and Tyr-279. A compositionally biased stretch (low complexity) spans 445–457 (PVAAKATAKPVKA). Residues 445–468 (PVAAKATAKPVKAPVKKPIAKKKG) form a disordered region. The segment covering 458–468 (PVKKPIAKKKG) has biased composition (basic residues).

Belongs to the argininosuccinate synthase family. Type 1 subfamily. As to quaternary structure, homotetramer.

It localises to the cytoplasm. It carries out the reaction L-citrulline + L-aspartate + ATP = 2-(N(omega)-L-arginino)succinate + AMP + diphosphate + H(+). The protein operates within amino-acid biosynthesis; L-arginine biosynthesis; L-arginine from L-ornithine and carbamoyl phosphate: step 2/3. The sequence is that of Argininosuccinate synthase from Dechloromonas aromatica (strain RCB).